We begin with the raw amino-acid sequence, 142 residues long: Nucleoside diphosphate kinase (142 aa).

6 residues coordinate ATP: Lys-11, Phe-59, Arg-87, Thr-93, Arg-104, and Asn-114. The active-site Pros-phosphohistidine intermediate is His-117.

This sequence belongs to the NDK family. Homotetramer. The cofactor is Mg(2+).

It localises to the cytoplasm. It carries out the reaction a 2'-deoxyribonucleoside 5'-diphosphate + ATP = a 2'-deoxyribonucleoside 5'-triphosphate + ADP. It catalyses the reaction a ribonucleoside 5'-diphosphate + ATP = a ribonucleoside 5'-triphosphate + ADP. In terms of biological role, major role in the synthesis of nucleoside triphosphates other than ATP. The ATP gamma phosphate is transferred to the NDP beta phosphate via a ping-pong mechanism, using a phosphorylated active-site intermediate. In Wigglesworthia glossinidia brevipalpis, this protein is Nucleoside diphosphate kinase.